We begin with the raw amino-acid sequence, 232 residues long: Ubiquinone biosynthesis O-methyltransferase (232 aa).

S-adenosyl-L-methionine contacts are provided by R36, G55, D76, and M120.

The protein belongs to the methyltransferase superfamily. UbiG/COQ3 family.

It catalyses the reaction a 3-demethylubiquinol + S-adenosyl-L-methionine = a ubiquinol + S-adenosyl-L-homocysteine + H(+). The catalysed reaction is a 3-(all-trans-polyprenyl)benzene-1,2-diol + S-adenosyl-L-methionine = a 2-methoxy-6-(all-trans-polyprenyl)phenol + S-adenosyl-L-homocysteine + H(+). The protein operates within cofactor biosynthesis; ubiquinone biosynthesis. Its function is as follows. O-methyltransferase that catalyzes the 2 O-methylation steps in the ubiquinone biosynthetic pathway. The protein is Ubiquinone biosynthesis O-methyltransferase of Paraburkholderia phymatum (strain DSM 17167 / CIP 108236 / LMG 21445 / STM815) (Burkholderia phymatum).